Reading from the N-terminus, the 107-residue chain is Nucleoid-associated protein CE0210 (107 aa).

It belongs to the YbaB/EbfC family. Homodimer.

It is found in the cytoplasm. It localises to the nucleoid. In terms of biological role, binds to DNA and alters its conformation. May be involved in regulation of gene expression, nucleoid organization and DNA protection. The polypeptide is Nucleoid-associated protein CE0210 (Corynebacterium efficiens (strain DSM 44549 / YS-314 / AJ 12310 / JCM 11189 / NBRC 100395)).